The following is a 99-amino-acid chain: MICOS complex subunit MIC10 (99 aa).

A run of 2 helical transmembrane segments spans residues 27–43 (RFVYSSLGGAFAGLLFF) and 50–66 (WASIAFGAGIGIGSAYT).

This sequence belongs to the MICOS complex subunit Mic10 family. As to quaternary structure, component of the mitochondrial contact site and cristae organizing system (MICOS) complex. The MICOS complex associates with mitochondrial outer membrane proteins. Present in a large lipid-enriched complex called mitochondrial transmembrane lipoprotein (MTL) complex made of proteins located in the two mitochondrial membranes, including the TOM complex and the core components of the MICOS complex and containing at least digalactosyldiacylglycerol (DGDG).

It localises to the mitochondrion inner membrane. Its function is as follows. Component of the MICOS complex, a large protein complex of the mitochondrial inner membrane that plays crucial roles in the maintenance of crista junctions, inner membrane architecture, and formation of contact sites to the outer membrane. This chain is MICOS complex subunit MIC10, found in Arabidopsis thaliana (Mouse-ear cress).